The following is a 378-amino-acid chain: Cysteine endopeptidase RepA (378 aa).

The signal sequence occupies residues 1–24 (MLRCFLVAAAAVALAAAAAAPARA). A propeptide spans 25-141 (IPFTESDLSS…SFRYGGDDED (117 aa)) (activation peptide). 3 disulfide bridges follow: C164-C206, C198-C239, and C297-C350. C167 is an active-site residue. Active-site residues include H303 and N324.

It belongs to the peptidase C1 family.

Its subcellular location is the protein storage vacuole. In terms of biological role, cysteine endopeptidase that digests in vitro both the acidic and basic subunits of glutelin, the major seed storage protein of rice. The chain is Cysteine endopeptidase RepA from Oryza sativa subsp. japonica (Rice).